Here is a 720-residue protein sequence, read N- to C-terminus: Asp/Glu-specific dipeptidyl-peptidase (720 aa).

Residues 1–21 (MKKRLLLPLFAALCLSQIAHA) form the signal peptide. A disulfide bridge connects residues Cys69 and Cys86. Residues His85, Asp227, and Ser655 each act as charge relay system in the active site.

This sequence belongs to the peptidase S46 family. As to quaternary structure, homodimer.

The protein resides in the cell surface. Enzyme activity is completely blocked by diisopropyl-fluorophosphates, moderately by phenylmethylsulfonyl fluoride (PMSF) and 4-(2-methyl)benzenesulfonyl fluoride, and slightly by pepstatin in vitro. In terms of biological role, catalyzes the removal of dipeptides from the N-terminus of oligopeptides. Shows a strict specificity for acidic residues (Asp or Glu) in the P1 position, and has a hydrophobic residue preference at the P2 position. Preferentially cleaves the synthetic substrate Leu-Asp-methylcoumaryl-7-amide (Leu-Asp-MCA) as compared to Leu-Glu-MCA. Is involved in amino acid metabolism and bacterial growth of asaccharolytic P.gingivalis, that utilizes amino acids from extracellular proteinaceous nutrients as energy and carbon sources. The protein is Asp/Glu-specific dipeptidyl-peptidase of Porphyromonas gingivalis (strain ATCC 33277 / DSM 20709 / CIP 103683 / JCM 12257 / NCTC 11834 / 2561).